The primary structure comprises 65 residues: Metallothionein-like protein type 3 (65 aa).

This sequence belongs to the metallothionein superfamily. Type 15 family.

In terms of biological role, metallothioneins have a high content of cysteine residues that bind various heavy metals. In Musa acuminata (Banana), this protein is Metallothionein-like protein type 3.